A 192-amino-acid polypeptide reads, in one-letter code: Pyridoxal 5'-phosphate synthase subunit PdxT (192 aa).

53-55 (GES) is a binding site for L-glutamine. C82 (nucleophile) is an active-site residue. L-glutamine-binding positions include R108 and 134–135 (IR). Residues H170 and E172 each act as charge relay system in the active site.

This sequence belongs to the glutaminase PdxT/SNO family. As to quaternary structure, in the presence of PdxS, forms a dodecamer of heterodimers. Only shows activity in the heterodimer.

It catalyses the reaction aldehydo-D-ribose 5-phosphate + D-glyceraldehyde 3-phosphate + L-glutamine = pyridoxal 5'-phosphate + L-glutamate + phosphate + 3 H2O + H(+). The enzyme catalyses L-glutamine + H2O = L-glutamate + NH4(+). Its pathway is cofactor biosynthesis; pyridoxal 5'-phosphate biosynthesis. In terms of biological role, catalyzes the hydrolysis of glutamine to glutamate and ammonia as part of the biosynthesis of pyridoxal 5'-phosphate. The resulting ammonia molecule is channeled to the active site of PdxS. The sequence is that of Pyridoxal 5'-phosphate synthase subunit PdxT from Methanosphaera stadtmanae (strain ATCC 43021 / DSM 3091 / JCM 11832 / MCB-3).